The following is a 300-amino-acid chain: uncharacterized protein (300 aa).

Residues 230 to 251 are disordered; the sequence is LRQSTSRQSISRQSISRQSTSR. Residues 231-251 are compositionally biased toward low complexity; that stretch reads RQSTSRQSISRQSISRQSTSR.

This is an uncharacterized protein from Acanthamoeba polyphaga (Amoeba).